The chain runs to 238 residues: tRNA (guanine-N(7)-)-methyltransferase (238 aa).

S-adenosyl-L-methionine is bound by residues Glu-68, Glu-93, Asp-120, and Asp-143. Asp-143 is a catalytic residue. Substrate-binding positions include Lys-147, Asp-179, and 216 to 219; that span reads TKFE.

It belongs to the class I-like SAM-binding methyltransferase superfamily. TrmB family.

It catalyses the reaction guanosine(46) in tRNA + S-adenosyl-L-methionine = N(7)-methylguanosine(46) in tRNA + S-adenosyl-L-homocysteine. It functions in the pathway tRNA modification; N(7)-methylguanine-tRNA biosynthesis. Catalyzes the formation of N(7)-methylguanine at position 46 (m7G46) in tRNA. In Shewanella oneidensis (strain ATCC 700550 / JCM 31522 / CIP 106686 / LMG 19005 / NCIMB 14063 / MR-1), this protein is tRNA (guanine-N(7)-)-methyltransferase.